We begin with the raw amino-acid sequence, 330 residues long: Ribosomal RNA small subunit methyltransferase H (330 aa).

Residues 48–50 (GGH), Asp-67, Leu-101, Asp-115, and Gln-122 each bind S-adenosyl-L-methionine.

The protein belongs to the methyltransferase superfamily. RsmH family.

Its subcellular location is the cytoplasm. It carries out the reaction cytidine(1402) in 16S rRNA + S-adenosyl-L-methionine = N(4)-methylcytidine(1402) in 16S rRNA + S-adenosyl-L-homocysteine + H(+). Functionally, specifically methylates the N4 position of cytidine in position 1402 (C1402) of 16S rRNA. The chain is Ribosomal RNA small subunit methyltransferase H from Pseudarthrobacter chlorophenolicus (strain ATCC 700700 / DSM 12829 / CIP 107037 / JCM 12360 / KCTC 9906 / NCIMB 13794 / A6) (Arthrobacter chlorophenolicus).